We begin with the raw amino-acid sequence, 606 residues long: Putative auxin response factor 21 (606 aa).

The TF-B3 DNA-binding region spans 126 to 228; sequence FTKVLTASDT…ELRVGIRRAR (103 aa). One can recognise a PB1 domain in the interval 511-592; the sequence is RTCTKVQMQG…MVKKILIYSK (82 aa).

This sequence belongs to the ARF family. As to quaternary structure, homodimers and heterodimers.

It is found in the nucleus. Functionally, auxin response factors (ARFs) are transcriptional factors that bind specifically to the DNA sequence 5'-TGTCTC-3' found in the auxin-responsive promoter elements (AuxREs). Could act as transcriptional activator or repressor. Formation of heterodimers with Aux/IAA proteins may alter their ability to modulate early auxin response genes expression. This Arabidopsis thaliana (Mouse-ear cress) protein is Putative auxin response factor 21 (ARF21).